A 306-amino-acid chain; its full sequence is Aspartate carbamoyltransferase catalytic subunit (306 aa).

Carbamoyl phosphate contacts are provided by Arg55 and Thr56. Lys84 lines the L-aspartate pocket. Residues Arg105, His133, and Gln136 each contribute to the carbamoyl phosphate site. Residues Arg166 and Arg227 each coordinate L-aspartate. Carbamoyl phosphate contacts are provided by Leu265 and Pro266.

This sequence belongs to the aspartate/ornithine carbamoyltransferase superfamily. ATCase family. In terms of assembly, heterododecamer (2C3:3R2) of six catalytic PyrB chains organized as two trimers (C3), and six regulatory PyrI chains organized as three dimers (R2).

It carries out the reaction carbamoyl phosphate + L-aspartate = N-carbamoyl-L-aspartate + phosphate + H(+). It functions in the pathway pyrimidine metabolism; UMP biosynthesis via de novo pathway; (S)-dihydroorotate from bicarbonate: step 2/3. Functionally, catalyzes the condensation of carbamoyl phosphate and aspartate to form carbamoyl aspartate and inorganic phosphate, the committed step in the de novo pyrimidine nucleotide biosynthesis pathway. The sequence is that of Aspartate carbamoyltransferase catalytic subunit from Aeromonas salmonicida (strain A449).